A 217-amino-acid polypeptide reads, in one-letter code: Probable rhamnogalacturonan acetylesterase YesY (217 aa).

Catalysis depends on Ser-11, which acts as the Nucleophile. Catalysis depends on residues Glu-178 and His-185.

Belongs to the 'GDSL' lipolytic enzyme family.

Functionally, may play a role in the degradation of rhamnogalacturonan derived from plant cell walls. Probably has broad substrate specificity and may degrade several types of acetylated substrates. The chain is Probable rhamnogalacturonan acetylesterase YesY (yesY) from Bacillus subtilis (strain 168).